We begin with the raw amino-acid sequence, 483 residues long: Glutamyl-tRNA(Gln) amidotransferase subunit A (483 aa).

Residues K76 and S151 each act as charge relay system in the active site. S175 serves as the catalytic Acyl-ester intermediate.

It belongs to the amidase family. GatA subfamily. Heterotrimer of A, B and C subunits.

The catalysed reaction is L-glutamyl-tRNA(Gln) + L-glutamine + ATP + H2O = L-glutaminyl-tRNA(Gln) + L-glutamate + ADP + phosphate + H(+). Its function is as follows. Allows the formation of correctly charged Gln-tRNA(Gln) through the transamidation of misacylated Glu-tRNA(Gln) in organisms which lack glutaminyl-tRNA synthetase. The reaction takes place in the presence of glutamine and ATP through an activated gamma-phospho-Glu-tRNA(Gln). The polypeptide is Glutamyl-tRNA(Gln) amidotransferase subunit A (Pseudomonas putida (strain W619)).